Here is a 301-residue protein sequence, read N- to C-terminus: Sulfate adenylyltransferase subunit 2 (301 aa).

Belongs to the PAPS reductase family. CysD subfamily. As to quaternary structure, heterodimer composed of CysD, the smaller subunit, and CysN.

The catalysed reaction is sulfate + ATP + H(+) = adenosine 5'-phosphosulfate + diphosphate. It participates in sulfur metabolism; hydrogen sulfide biosynthesis; sulfite from sulfate: step 1/3. Its function is as follows. With CysN forms the ATP sulfurylase (ATPS) that catalyzes the adenylation of sulfate producing adenosine 5'-phosphosulfate (APS) and diphosphate, the first enzymatic step in sulfur assimilation pathway. APS synthesis involves the formation of a high-energy phosphoric-sulfuric acid anhydride bond driven by GTP hydrolysis by CysN coupled to ATP hydrolysis by CysD. This Shewanella woodyi (strain ATCC 51908 / MS32) protein is Sulfate adenylyltransferase subunit 2.